Reading from the N-terminus, the 503-residue chain is GMP synthase [glutamine-hydrolyzing] (503 aa).

One can recognise a Glutamine amidotransferase type-1 domain in the interval 3–189; that stretch reads PVLVVDFGSQ…AFLSSFAAPN (187 aa). C80 serves as the catalytic Nucleophile. Catalysis depends on residues H165 and E167. In terms of domain architecture, GMPS ATP-PPase spans 190-380; it reads WDPEQTICGT…LGIPKHIVHR (191 aa). ATP is bound at residue 217 to 223; the sequence is SGGVDSV.

As to quaternary structure, homodimer.

The enzyme catalyses XMP + L-glutamine + ATP + H2O = GMP + L-glutamate + AMP + diphosphate + 2 H(+). It functions in the pathway purine metabolism; GMP biosynthesis; GMP from XMP (L-Gln route): step 1/1. Its function is as follows. Catalyzes the synthesis of GMP from XMP. In Tropheryma whipplei (strain TW08/27) (Whipple's bacillus), this protein is GMP synthase [glutamine-hydrolyzing].